The primary structure comprises 758 residues: CRISPR system single-strand-specific deoxyribonuclease Cas10/Csm1 (subtype III-A) (758 aa).

The interval 1–82 (MKKEKIDLFY…TYIADNIASG (82 aa)) is HD domain. Positions 509 to 647 (KRLAVVRLDV…EKDSISLFSS (139 aa)) constitute a GGDEF domain.

This sequence belongs to the CRISPR-associated Cas10/Csm1 family. In terms of assembly, part of the Csm effector complex that includes at least Cas10(1), Csm2(3), Csm3(5), Csm4(1), Csm5(1) and mature crRNA. The Csm complex is elongated and slightly twisted with a maximal length of 215 Angstroms and a diameter of 75-80 Angstroms. It has been modeled to have a central protein filamant of Csm3 subunits along which the dsRNA helix of paired crRNA and target RNA binds. The filament is capped at one end by Cas10 and Csm4 and at the other end by Csm5; ssDNA is thought to bind to the N-terminal HD domain of Cas10. Csm with a precursor crRNA does not include Csm5, while Cas6, the enzyme probably involved in pre-crRNA processing, is found associated with a subset of the Csm complex. A divalent metal cation serves as cofactor.

It catalyses the reaction 6 ATP = cyclic hexaadenylate + 6 diphosphate. With respect to regulation, ssDNase activity is activated by target RNA binding to the Csm-crRNA complex and is inhibited by EDTA. CRISPR (clustered regularly interspaced short palindromic repeat) is an adaptive immune system that provides protection against mobile genetic elements (viruses, transposable elements and conjugative plasmids). CRISPR clusters contain spacers, sequences complementary to antecedent mobile elements, and target invading nucleic acids. CRISPR clusters are transcribed and processed into CRISPR RNA (crRNA). The type III-A Csm effector complex binds crRNA and acts as a crRNA-guided RNase, DNase and cyclic oligoadenylate synthase; binding of target RNA cognate to the crRNA is required for all activities. In a heterologous host this Csm effector complex restricts ssRNA phage MS2, suggesting it may target RNA viruses in vivo. Its function is as follows. Csm functions as a non-specific ssDNase. Base-pairing between crRNA and target RNA to form a ternary Csm complex activates a ssDNase activity; target RNA cleavage suppresses the ssDNase, a temporal control that prevents uncontrolled DNA degradation. Viral RNA transcripts probably tether the Csm complex to the viral genome, recruiting Cas10 ssDNA activity which is able to degrade DNA in the transcription bubble, spatially controlling the DNase activity. Functionally, this subunit has a weak ssDNase activity that is dramatically activated by the ternary Csm effector complex (the crRNA, Cas proteins and a cognate target ssRNA). Target RNA and ssDNA are cleaved simultaneously, although RNase activity (of Csm3) is much faster. RNA cleavage by Csm3 is not required for ssDNase activity as Csm complex with inactive Csm3 still has ssDNase activity; however as the cleaved target RNA products dissociate away ssDNase activity decreases. Self-recognition, with subsequent repression of the ssDNase activity, occurs when the 5' handle of the crRNA bases pairs with the 3' flanking sequence of the target RNA (which would occur if the CRISPR locus were transcribed as an anti-pre-crRNA). This protein has low activity on dsDNA which is not stimulated by the Csm complex. In terms of biological role, this subunit is a single-strand-specific deoxyribonuclease (ssDNase) which digests both linear and circular ssDNA; it has both exo- and endonuclease activity. When associated with the ternary Csm effector complex (the crRNA, Cas proteins and a cognate target ssRNA) synthesizes cyclic oligoadenylates (cOA) from ATP, producing cyclic triadenylate (cA3) up to cyclic hexaadenylate (cA6), which is the active cOA. The enzyme is also able to cyclize pppA3 up to pppA6. cOAs are second messengers that induce an antiviral state important for defense against invading nucleic acids. Synthesis of cOA can occur with AMP plus ATP, 2'dATP or 3'dATP (but no other nucleotides), and requires a free 3'-OH ribose moiety. In Streptococcus thermophilus, this protein is CRISPR system single-strand-specific deoxyribonuclease Cas10/Csm1 (subtype III-A).